The chain runs to 285 residues: Involucrin (285 aa).

Disordered regions lie at residues 1-93 (MSQQ…QEQK), 120-256 (LEQQ…AQVQ), and 266-285 (LPLIEQQHQKQEVHDPPEHQ). Positions 27–39 (IDTQQEQVKQPTS) are enriched in polar residues. 3 stretches are compositionally biased toward low complexity: residues 72-87 (EQQCEPQEQEQQQKQQ), 120-129 (LEQQQEQQES), and 137-147 (EQCLEQQQEQQ). Basic and acidic residues-rich tracts occupy residues 149–165 (SQEKELHLEQEQQKEEL), 175–185 (EQCEKHQEAKN), and 200–233 (QQKEQLEQEKKLVDQHLDQEPAQRTEQPEKKEEQ). A compositionally biased stretch (low complexity) spans 235–248 (LEQQGQQEGQLEQP). The span at 272–285 (QHQKQEVHDPPEHQ) shows a compositional bias: basic and acidic residues.

It belongs to the involucrin family. As to quaternary structure, directly or indirectly cross-linked to cornifelin (CNFN). Post-translationally, substrate of transglutaminase. Specific glutamines or lysines are cross-linked to keratins, desmoplakin and to inter involucrin molecules. Keratinocytes of epidermis and other stratified squamous epithelia.

It localises to the cytoplasm. In terms of biological role, part of the insoluble cornified cell envelope (CE) of stratified squamous epithelia. The protein is Involucrin (IVL) of Canis lupus familiaris (Dog).